The sequence spans 654 residues: Threonine--tRNA ligase (654 aa).

In terms of domain architecture, TGS spans 1–63 (MASINVKFPD…TTDGSIEIIA (63 aa)). The catalytic stretch occupies residues 248–546 (DHRVIGNELD…LTEIYKGAFP (299 aa)). Positions 342, 393, and 523 each coordinate Zn(2+).

This sequence belongs to the class-II aminoacyl-tRNA synthetase family. Homodimer. It depends on Zn(2+) as a cofactor.

The protein resides in the cytoplasm. It carries out the reaction tRNA(Thr) + L-threonine + ATP = L-threonyl-tRNA(Thr) + AMP + diphosphate + H(+). Catalyzes the attachment of threonine to tRNA(Thr) in a two-step reaction: L-threonine is first activated by ATP to form Thr-AMP and then transferred to the acceptor end of tRNA(Thr). Also edits incorrectly charged L-seryl-tRNA(Thr). This is Threonine--tRNA ligase from Lactiplantibacillus plantarum (strain ATCC BAA-793 / NCIMB 8826 / WCFS1) (Lactobacillus plantarum).